The following is a 502-amino-acid chain: 1-aminocyclopropane-1-carboxylate synthase-like protein 1 (502 aa).

The interval 15–35 is disordered; that stretch reads CPGSDSIQDLPSNKGDGLERE. Glu106 contributes to the substrate binding site. At Lys324 the chain carries N6-(pyridoxal phosphate)lysine.

The protein belongs to the class-I pyridoxal-phosphate-dependent aminotransferase family.

Functionally, does not catalyze the synthesis of 1-aminocyclopropane-1-carboxylate but is capable of catalyzing the deamination of L-vinylglycine. In Bos taurus (Bovine), this protein is 1-aminocyclopropane-1-carboxylate synthase-like protein 1 (ACCS).